The chain runs to 178 residues: Large ribosomal subunit protein bL17 (178 aa).

This sequence belongs to the bacterial ribosomal protein bL17 family. Part of the 50S ribosomal subunit. Contacts protein L32.

The protein is Large ribosomal subunit protein bL17 of Lachnospira eligens (strain ATCC 27750 / DSM 3376 / VPI C15-48 / C15-B4) (Eubacterium eligens).